A 348-amino-acid chain; its full sequence is Histidinol-phosphate aminotransferase (348 aa).

Lys210 carries the post-translational modification N6-(pyridoxal phosphate)lysine.

It belongs to the class-II pyridoxal-phosphate-dependent aminotransferase family. Histidinol-phosphate aminotransferase subfamily. As to quaternary structure, homodimer. The cofactor is pyridoxal 5'-phosphate.

It carries out the reaction L-histidinol phosphate + 2-oxoglutarate = 3-(imidazol-4-yl)-2-oxopropyl phosphate + L-glutamate. The protein operates within amino-acid biosynthesis; L-histidine biosynthesis; L-histidine from 5-phospho-alpha-D-ribose 1-diphosphate: step 7/9. This is Histidinol-phosphate aminotransferase from Pseudomonas putida (strain W619).